The sequence spans 133 residues: DNA-directed RNA polymerase subunit omega (133 aa).

It belongs to the RNA polymerase subunit omega family. In terms of assembly, the RNAP catalytic core consists of 2 alpha, 1 beta, 1 beta' and 1 omega subunit. When a sigma factor is associated with the core the holoenzyme is formed, which can initiate transcription.

The enzyme catalyses RNA(n) + a ribonucleoside 5'-triphosphate = RNA(n+1) + diphosphate. Functionally, promotes RNA polymerase assembly. Latches the N- and C-terminal regions of the beta' subunit thereby facilitating its interaction with the beta and alpha subunits. The protein is DNA-directed RNA polymerase subunit omega of Brucella canis (strain ATCC 23365 / NCTC 10854 / RM-666).